We begin with the raw amino-acid sequence, 364 residues long: Biotin synthase (364 aa).

The 236-residue stretch at 68–303 folds into the Radical SAM core domain; sequence CCGNTVDLCS…QQILRYAGGR (236 aa). [4Fe-4S] cluster is bound by residues cysteine 86, cysteine 90, and cysteine 93. [2Fe-2S] cluster contacts are provided by cysteine 131, cysteine 168, cysteine 228, and arginine 298.

Belongs to the radical SAM superfamily. Biotin synthase family. Homodimer. It depends on [4Fe-4S] cluster as a cofactor. Requires [2Fe-2S] cluster as cofactor.

It carries out the reaction (4R,5S)-dethiobiotin + (sulfur carrier)-SH + 2 reduced [2Fe-2S]-[ferredoxin] + 2 S-adenosyl-L-methionine = (sulfur carrier)-H + biotin + 2 5'-deoxyadenosine + 2 L-methionine + 2 oxidized [2Fe-2S]-[ferredoxin]. It functions in the pathway cofactor biosynthesis; biotin biosynthesis; biotin from 7,8-diaminononanoate: step 2/2. Its function is as follows. Catalyzes the conversion of dethiobiotin (DTB) to biotin by the insertion of a sulfur atom into dethiobiotin via a radical-based mechanism. The sequence is that of Biotin synthase from Microcystis aeruginosa (strain NIES-843 / IAM M-2473).